Consider the following 103-residue polypeptide: Large ribosomal subunit protein bL21 (103 aa).

It belongs to the bacterial ribosomal protein bL21 family. In terms of assembly, part of the 50S ribosomal subunit. Contacts protein L20.

In terms of biological role, this protein binds to 23S rRNA in the presence of protein L20. The protein is Large ribosomal subunit protein bL21 of Colwellia psychrerythraea (strain 34H / ATCC BAA-681) (Vibrio psychroerythus).